We begin with the raw amino-acid sequence, 72 residues long: Large ribosomal subunit protein uL29 (72 aa).

This sequence belongs to the universal ribosomal protein uL29 family.

The polypeptide is Large ribosomal subunit protein uL29 (Chlamydia felis (strain Fe/C-56) (Chlamydophila felis)).